Here is a 756-residue protein sequence, read N- to C-terminus: Membrane-anchored protein 1 (756 aa).

A signal peptide spans 1-24; the sequence is MIRNTLAFLAILFLLIPTALLIIG. N-linked (GlcNAc...) asparagine glycosylation is found at N52 and N64. 3 consecutive transmembrane segments (helical) span residues 91 to 111, 120 to 140, and 148 to 168; these read IISA…IFLV, IIVV…ELVL, and QSYV…ALCL. N-linked (GlcNAc...) asparagine glycosylation is present at N190. The segment at 281–328 is disordered; that stretch reads YDEFRKSESSPSRSSVLSTSKPEVHETEGYCPHKTGNRPGFPSLNIPR. Residues 289–300 are compositionally biased toward low complexity; the sequence is SSPSRSSVLSTS. N-linked (GlcNAc...) asparagine glycosylation is found at N396 and N407. The disordered stretch occupies residues 427–453; that stretch reads EPPATRMPQTRSPVNDHSSFPSDLPIK. The span at 433-447 shows a compositional bias: polar residues; that stretch reads MPQTRSPVNDHSSFP. S438 carries the post-translational modification Phosphoserine. N-linked (GlcNAc...) asparagine glycans are attached at residues N459, N470, N471, N496, N497, N521, N522, N547, N548, N573, N574, N594, N598, N599, N618, N623, N649, N664, N676, and N685. The disordered stretch occupies residues 482–650; sequence MLKNVGNGPR…MPTSPNSRNN (169 aa). The segment covering 485 to 520 has biased composition (low complexity); it reads NVGNGPRNAPRNNSSNNLHAQGGMPMNMRGPRGAPR. Polar residues-rich tracts occupy residues 593-605, 617-629, and 640-650; these read RNTS…SEFN, RNAS…TDLF, and GMPTSPNSRNN. Residues 686–697 are compositionally biased toward polar residues; it reads GSRNPSHGSLNT. The interval 686–713 is disordered; it reads GSRNPSHGSLNTAHAGMGYGPRSMMRDP. N715 carries N-linked (GlcNAc...) asparagine glycosylation. The disordered stretch occupies residues 735–756; the sequence is FELPVRGNRNNRRGPGGNRMIR.

The protein to yeast YOL019W and YMR063W.

It is found in the cell membrane. Its subcellular location is the cell tip. Functionally, required for correct cell separation at high temperatures. The sequence is that of Membrane-anchored protein 1 (mac1) from Schizosaccharomyces pombe (strain 972 / ATCC 24843) (Fission yeast).